Here is a 189-residue protein sequence, read N- to C-terminus: Prostaglandin-H2 D-isomerase (189 aa).

Residues 1-24 (MAALRMLWMGLVLLGLLGFPQTPA) form the signal peptide. Position 25 is a pyrrolidone carboxylic acid (Q25). N-linked (GlcNAc...) asparagine glycosylation occurs at N51. Residue C65 is the Nucleophile of the active site. N-linked (GlcNAc...) asparagine glycosylation is present at N78. A disulfide bridge links C89 with C186.

The protein belongs to the calycin superfamily. Lipocalin family. As to quaternary structure, monomer. Abundant in the brain and CNS, where it is expressed in tissues of the blood-brain barrier and secreted into the cerebro-spinal fluid. In the male reproductive system, it is expressed in the testis, efferent ducts and epididymis, and is secreted into the seminal fluid. In the eye, it is expressed in the pigmented epithelium of the retina and the nonpigmented epithelium of the ciliary body, and secreted into the aqueous humor. Low levels detected in various tissue fluids such as serum, normal urine, ascitic fluid and tear fluid. Also found in a number of other organs including the ear, heart and lung.

The protein resides in the rough endoplasmic reticulum. The protein localises to the nucleus membrane. It localises to the golgi apparatus. It is found in the cytoplasm. Its subcellular location is the perinuclear region. The protein resides in the secreted. It catalyses the reaction prostaglandin H2 = prostaglandin D2. In terms of biological role, catalyzes the conversion of PGH2 to PGD2, a prostaglandin involved in smooth muscle contraction/relaxation and a potent inhibitor of platelet aggregation. Involved in a variety of CNS functions, such as sedation, NREM sleep and PGE2-induced allodynia, and may have an anti-apoptotic role in oligodendrocytes. Binds small non-substrate lipophilic molecules, including biliverdin, bilirubin, retinal, retinoic acid and thyroid hormone, and may act as a scavenger for harmful hydrophobic molecules and as a secretory retinoid and thyroid hormone transporter. Possibly involved in development and maintenance of the blood-brain, blood-retina, blood-aqueous humor and blood-testis barrier. It is likely to play important roles in both maturation and maintenance of the central nervous system and male reproductive system. Involved in PLA2G3-dependent maturation of mast cells. PLA2G3 is secreted by immature mast cells and acts on nearby fibroblasts upstream to PTDGS to synthesize PGD2, which in turn promotes mast cell maturation and degranulation via PTGDR. The protein is Prostaglandin-H2 D-isomerase (Ptgds) of Mus musculus (Mouse).